A 174-amino-acid chain; its full sequence is uncharacterized protein (174 aa).

2 helical membrane passes run 29–51 (FAVE…GFWY) and 66–83 (VIVI…VTKI).

The protein localises to the cell membrane. This is an uncharacterized protein from Bacillus subtilis (strain 168).